We begin with the raw amino-acid sequence, 292 residues long: uncharacterized protein (292 aa).

The next 4 helical transmembrane spans lie at 17–37 (LFYT…FPAL), 135–155 (LIAV…IGQL), 166–186 (TTLW…YDIV), and 216–236 (FHGV…TALY). The segment at 267-292 (EKSEDKKSIVTSRIEEENEDEISDYE) is disordered. The span at 282–292 (EENEDEISDYE) shows a compositional bias: acidic residues.

The protein localises to the membrane. This is an uncharacterized protein from Caenorhabditis elegans.